The following is a 141-amino-acid chain: Large ribosomal subunit protein uL11 (141 aa).

The protein belongs to the universal ribosomal protein uL11 family. As to quaternary structure, part of the ribosomal stalk of the 50S ribosomal subunit. Interacts with L10 and the large rRNA to form the base of the stalk. L10 forms an elongated spine to which L12 dimers bind in a sequential fashion forming a multimeric L10(L12)X complex. One or more lysine residues are methylated.

In terms of biological role, forms part of the ribosomal stalk which helps the ribosome interact with GTP-bound translation factors. In Petrotoga mobilis (strain DSM 10674 / SJ95), this protein is Large ribosomal subunit protein uL11.